A 466-amino-acid chain; its full sequence is 3-isopropylmalate dehydratase large subunit (466 aa).

[4Fe-4S] cluster is bound by residues Cys-347, Cys-407, and Cys-410.

Belongs to the aconitase/IPM isomerase family. LeuC type 1 subfamily. As to quaternary structure, heterodimer of LeuC and LeuD. [4Fe-4S] cluster is required as a cofactor.

The catalysed reaction is (2R,3S)-3-isopropylmalate = (2S)-2-isopropylmalate. It participates in amino-acid biosynthesis; L-leucine biosynthesis; L-leucine from 3-methyl-2-oxobutanoate: step 2/4. Its function is as follows. Catalyzes the isomerization between 2-isopropylmalate and 3-isopropylmalate, via the formation of 2-isopropylmaleate. The protein is 3-isopropylmalate dehydratase large subunit of Shigella flexneri.